Reading from the N-terminus, the 130-residue chain is Protein ApaG (130 aa).

The ApaG domain maps to 3–127; sequence RALTRDIEVT…FSLDTPDLRR (125 aa).

In Allorhizobium ampelinum (strain ATCC BAA-846 / DSM 112012 / S4) (Agrobacterium vitis (strain S4)), this protein is Protein ApaG.